The following is a 432-amino-acid chain: Adenylosuccinate synthetase (432 aa).

GTP is bound by residues 11–17 and 39–41; these read GDEGKGK and GHT. Residue D12 is the Proton acceptor of the active site. Residues D12 and G39 each contribute to the Mg(2+) site. IMP contacts are provided by residues 12–15, 37–40, T134, R148, N230, T245, and R309; these read DEGK and NAGH. The active-site Proton donor is H40. Substrate is bound at residue 305–311; the sequence is VTTGRKR. GTP-binding positions include R311, 337–339, and 419–421; these read KLD and GTG.

This sequence belongs to the adenylosuccinate synthetase family. As to quaternary structure, homodimer. It depends on Mg(2+) as a cofactor.

The protein localises to the cytoplasm. It catalyses the reaction IMP + L-aspartate + GTP = N(6)-(1,2-dicarboxyethyl)-AMP + GDP + phosphate + 2 H(+). It functions in the pathway purine metabolism; AMP biosynthesis via de novo pathway; AMP from IMP: step 1/2. Its function is as follows. Plays an important role in the de novo pathway and in the salvage pathway of purine nucleotide biosynthesis. Catalyzes the first committed step in the biosynthesis of AMP from IMP. This Kluyveromyces lactis (strain ATCC 8585 / CBS 2359 / DSM 70799 / NBRC 1267 / NRRL Y-1140 / WM37) (Yeast) protein is Adenylosuccinate synthetase.